We begin with the raw amino-acid sequence, 193 residues long: Adenylate kinase (193 aa).

10 to 15 is an ATP binding site; sequence GAGKGT. The segment at 30-59 is NMP; it reads STGDMLRAAVKAGTPIGLKAKAVMDAGGLV. Residues Thr-31, Arg-36, 57–59, 85–88, and Gln-92 each bind AMP; these read GLV and GFPR. An LID region spans residues 126–142; it reads KRAKETLAAGGTVRADD. Arg-127 contributes to the ATP binding site. 2 residues coordinate AMP: Arg-139 and Arg-150. Ala-178 contributes to the ATP binding site.

The protein belongs to the adenylate kinase family. In terms of assembly, monomer.

Its subcellular location is the cytoplasm. The enzyme catalyses AMP + ATP = 2 ADP. Its pathway is purine metabolism; AMP biosynthesis via salvage pathway; AMP from ADP: step 1/1. Catalyzes the reversible transfer of the terminal phosphate group between ATP and AMP. Plays an important role in cellular energy homeostasis and in adenine nucleotide metabolism. The chain is Adenylate kinase from Beijerinckia indica subsp. indica (strain ATCC 9039 / DSM 1715 / NCIMB 8712).